The following is a 535-amino-acid chain: uncharacterized protein (535 aa).

6 consecutive transmembrane segments (helical) span residues 63 to 83 (LTGI…PSIY), 90 to 110 (VTFG…TYWI), 143 to 163 (VAAV…TLYG), 168 to 188 (VFVT…ATNC), 226 to 246 (SLGS…VLLV), and 258 to 278 (VLIL…ILAW). The HAMP domain occupies 279 to 330 (LTAAPVRVVRAALKRVEQGDLRGDLVVFDGTELGELQRGFNAMVNGLRERER). In terms of domain architecture, Guanylate cyclase spans 362 to 486 (AVVFVDIVGS…KPVNQAARLC (125 aa)).

Belongs to the adenylyl cyclase class-3 family.

The protein resides in the cell membrane. This is an uncharacterized protein from Mycobacterium tuberculosis (strain ATCC 25618 / H37Rv).